A 507-amino-acid chain; its full sequence is ATP synthase subunit alpha, chloroplastic (507 aa).

Residue 170–177 (GDRQTGKT) participates in ATP binding. Position 257 is a phosphothreonine (Thr257).

It belongs to the ATPase alpha/beta chains family. In terms of assembly, F-type ATPases have 2 components, CF(1) - the catalytic core - and CF(0) - the membrane proton channel. CF(1) has five subunits: alpha(3), beta(3), gamma(1), delta(1), epsilon(1). CF(0) has four main subunits: a, b, b' and c.

The protein resides in the plastid. It is found in the chloroplast thylakoid membrane. It carries out the reaction ATP + H2O + 4 H(+)(in) = ADP + phosphate + 5 H(+)(out). Its function is as follows. Produces ATP from ADP in the presence of a proton gradient across the membrane. The alpha chain is a regulatory subunit. This Arabis hirsuta (Hairy rock-cress) protein is ATP synthase subunit alpha, chloroplastic.